The following is a 376-amino-acid chain: Succinate--CoA ligase [ADP-forming] subunit beta (376 aa).

Positions 9 to 237 constitute an ATP-grasp domain; the sequence is KEIFSKYGIP…PTEEEKVEAD (229 aa). Residues Lys46, 53–55, Val95, and Glu100 each bind ATP; that span reads GRG. Mg(2+) contacts are provided by Asn192 and Asp206. Residues Asn257 and 314-316 each bind substrate; that span reads GIT.

The protein belongs to the succinate/malate CoA ligase beta subunit family. As to quaternary structure, heterotetramer of two alpha and two beta subunits. Mg(2+) serves as cofactor.

The enzyme catalyses succinate + ATP + CoA = succinyl-CoA + ADP + phosphate. The catalysed reaction is GTP + succinate + CoA = succinyl-CoA + GDP + phosphate. It functions in the pathway carbohydrate metabolism; tricarboxylic acid cycle; succinate from succinyl-CoA (ligase route): step 1/1. Functionally, succinyl-CoA synthetase functions in the citric acid cycle (TCA), coupling the hydrolysis of succinyl-CoA to the synthesis of either ATP or GTP and thus represents the only step of substrate-level phosphorylation in the TCA. The beta subunit provides nucleotide specificity of the enzyme and binds the substrate succinate, while the binding sites for coenzyme A and phosphate are found in the alpha subunit. In Bacteroides thetaiotaomicron (strain ATCC 29148 / DSM 2079 / JCM 5827 / CCUG 10774 / NCTC 10582 / VPI-5482 / E50), this protein is Succinate--CoA ligase [ADP-forming] subunit beta.